Consider the following 31-residue polypeptide: Hemocyanin subunit 2 (31 aa).

It belongs to the tyrosinase family. Hemocyanin subfamily. In terms of tissue distribution, hemolymph.

It localises to the secreted. The protein localises to the extracellular space. Its function is as follows. Hemocyanins are copper-containing oxygen carriers occurring freely dissolved in the hemolymph of many mollusks and arthropods. The chain is Hemocyanin subunit 2 from Maja squinado (Mediterranean spider crab).